Consider the following 76-residue polypeptide: MAERPLDVIHKSLDKDVLVLLKRGNEFRGKLIGYDIHLNVVLADAELIQDGEVVKKYGKIVIRGDNVLALSPVELE.

In terms of domain architecture, Sm spans 4 to 76; the sequence is RPLDVIHKSL…VLALSPVELE (73 aa).

Belongs to the snRNP Sm proteins family.

This Thermococcus kodakarensis (strain ATCC BAA-918 / JCM 12380 / KOD1) (Pyrococcus kodakaraensis (strain KOD1)) protein is Putative snRNP Sm-like protein.